Reading from the N-terminus, the 449-residue chain is Glucose-6-phosphate isomerase (449 aa).

Glu-291 (proton donor) is an active-site residue. Active-site residues include His-312 and Lys-426.

Belongs to the GPI family.

Its subcellular location is the cytoplasm. The enzyme catalyses alpha-D-glucose 6-phosphate = beta-D-fructose 6-phosphate. Its pathway is carbohydrate biosynthesis; gluconeogenesis. It participates in carbohydrate degradation; glycolysis; D-glyceraldehyde 3-phosphate and glycerone phosphate from D-glucose: step 2/4. Functionally, catalyzes the reversible isomerization of glucose-6-phosphate to fructose-6-phosphate. The protein is Glucose-6-phosphate isomerase of Streptococcus pyogenes serotype M5 (strain Manfredo).